Consider the following 158-residue polypeptide: SsrA-binding protein (158 aa).

It belongs to the SmpB family.

It is found in the cytoplasm. Required for rescue of stalled ribosomes mediated by trans-translation. Binds to transfer-messenger RNA (tmRNA), required for stable association of tmRNA with ribosomes. tmRNA and SmpB together mimic tRNA shape, replacing the anticodon stem-loop with SmpB. tmRNA is encoded by the ssrA gene; the 2 termini fold to resemble tRNA(Ala) and it encodes a 'tag peptide', a short internal open reading frame. During trans-translation Ala-aminoacylated tmRNA acts like a tRNA, entering the A-site of stalled ribosomes, displacing the stalled mRNA. The ribosome then switches to translate the ORF on the tmRNA; the nascent peptide is terminated with the 'tag peptide' encoded by the tmRNA and targeted for degradation. The ribosome is freed to recommence translation, which seems to be the essential function of trans-translation. The sequence is that of SsrA-binding protein from Pseudoalteromonas atlantica (strain T6c / ATCC BAA-1087).